The sequence spans 210 residues: Holliday junction resolvase RecU (210 aa).

The segment at Met1–Lys34 is disordered. Mg(2+)-binding residues include Thr90, Asp92, Glu105, and Gln124.

This sequence belongs to the RecU family. It depends on Mg(2+) as a cofactor.

Its subcellular location is the cytoplasm. The enzyme catalyses Endonucleolytic cleavage at a junction such as a reciprocal single-stranded crossover between two homologous DNA duplexes (Holliday junction).. Its function is as follows. Endonuclease that resolves Holliday junction intermediates in genetic recombination. Cleaves mobile four-strand junctions by introducing symmetrical nicks in paired strands. Promotes annealing of linear ssDNA with homologous dsDNA. Required for DNA repair, homologous recombination and chromosome segregation. The chain is Holliday junction resolvase RecU from Latilactobacillus sakei subsp. sakei (strain 23K) (Lactobacillus sakei subsp. sakei).